Consider the following 535-residue polypeptide: GMP synthase [glutamine-hydrolyzing] (535 aa).

A Glutamine amidotransferase type-1 domain is found at 4–210 (KILILDFGSQ…VHEICKCKPD (207 aa)). Cys85 serves as the catalytic Nucleophile. Active-site residues include His184 and Glu186. Residues 211–403 (WVMGDYIAEA…LGLPREMVYR (193 aa)) enclose the GMPS ATP-PPase domain. 238–244 (SGGVDSS) lines the ATP pocket.

As to quaternary structure, homodimer.

The enzyme catalyses XMP + L-glutamine + ATP + H2O = GMP + L-glutamate + AMP + diphosphate + 2 H(+). The protein operates within purine metabolism; GMP biosynthesis; GMP from XMP (L-Gln route): step 1/1. Catalyzes the synthesis of GMP from XMP. The protein is GMP synthase [glutamine-hydrolyzing] of Polynucleobacter necessarius subsp. necessarius (strain STIR1).